The sequence spans 255 residues: uncharacterized protein (255 aa).

An N-terminal signal peptide occupies residues 1–23 (MKRLNKLVLGIIFLFLVISITAG). Cys-24 carries N-palmitoyl cysteine lipidation. A lipid anchor (S-diacylglycerol cysteine) is attached at Cys-24.

It belongs to the staphylococcal tandem lipoprotein family.

It is found in the cell membrane. This is an uncharacterized protein from Staphylococcus aureus (strain USA300).